We begin with the raw amino-acid sequence, 656 residues long: Squalene-hopene cyclase (656 aa).

A PFTB 1 repeat occupies 68–110; the sequence is EQKIANYLRRCQSREHWGWPVYYGGEFNISASVQAYFALKMTG. Asp-396 serves as the catalytic Proton donor. PFTB repeat units lie at residues 417-459, 485-525, 533-582, and 591-634; these read LDRA…ALLD, IERG…NASG, VLKC…GLMA, and VKRG…QFFP.

It belongs to the terpene cyclase/mutase family.

It carries out the reaction squalene = hop-22(29)-ene. It catalyses the reaction squalene + H2O = hopan-22-ol. Functionally, squalene cyclase that catalyzes the oxygen-independent cyclization of squalene into hopanoids, a class of cyclic triterpenoids including hop-22(29)-ene, hop-17(21)-ene, hop-21(22)-ene, and hopan-22-ol. The sequence is that of Squalene-hopene cyclase from Schizosaccharomyces japonicus (strain yFS275 / FY16936) (Fission yeast).